The chain runs to 129 residues: Follitropin subunit beta (129 aa).

A signal peptide spans 1-20 (MKTLQFFFLFCCWKAICCNS). 6 cysteine pairs are disulfide-bonded: Cys21/Cys69, Cys35/Cys84, Cys38/Cys122, Cys46/Cys100, Cys50/Cys102, and Cys105/Cys112. 2 N-linked (GlcNAc...) asparagine glycosylation sites follow: Asn25 and Asn42.

Belongs to the glycoprotein hormones subunit beta family. In terms of assembly, heterodimer. The active follitropin is a heterodimer composed of an alpha chain/CGA shared with other hormones and a unique beta chain/FSHB shown here.

The protein localises to the secreted. Functionally, together with the alpha chain CGA constitutes follitropin, the follicle-stimulating hormone, and provides its biological specificity to the hormone heterodimer. Binds FSHR, a G protein-coupled receptor, on target cells to activate downstream signaling pathways. Follitropin is involved in follicle development and spermatogenesis in reproductive organs. This chain is Follitropin subunit beta (FSHB), found in Gorilla gorilla gorilla (Western lowland gorilla).